Here is an 874-residue protein sequence, read N- to C-terminus: Valine--tRNA ligase (874 aa).

The 'HIGH' region motif lies at 51-61 (PNVTGVLHIGH). The short motif at 533-537 (KMSKS) is the 'KMSKS' region element. Residue Lys-536 participates in ATP binding. Residues 813 to 873 (LVARLKKQLE…IKQELDLLEQ (61 aa)) are a coiled coil.

It belongs to the class-I aminoacyl-tRNA synthetase family. ValS type 1 subfamily. As to quaternary structure, monomer.

The protein localises to the cytoplasm. It catalyses the reaction tRNA(Val) + L-valine + ATP = L-valyl-tRNA(Val) + AMP + diphosphate. Its function is as follows. Catalyzes the attachment of valine to tRNA(Val). As ValRS can inadvertently accommodate and process structurally similar amino acids such as threonine, to avoid such errors, it has a 'posttransfer' editing activity that hydrolyzes mischarged Thr-tRNA(Val) in a tRNA-dependent manner. In Helicobacter pylori (strain ATCC 700392 / 26695) (Campylobacter pylori), this protein is Valine--tRNA ligase.